Consider the following 215-residue polypeptide: Probable transaldolase (215 aa).

Residue Lys83 is the Schiff-base intermediate with substrate of the active site.

This sequence belongs to the transaldolase family. Type 3B subfamily.

It localises to the cytoplasm. The enzyme catalyses D-sedoheptulose 7-phosphate + D-glyceraldehyde 3-phosphate = D-erythrose 4-phosphate + beta-D-fructose 6-phosphate. The protein operates within carbohydrate degradation; pentose phosphate pathway; D-glyceraldehyde 3-phosphate and beta-D-fructose 6-phosphate from D-ribose 5-phosphate and D-xylulose 5-phosphate (non-oxidative stage): step 2/3. Functionally, transaldolase is important for the balance of metabolites in the pentose-phosphate pathway. The sequence is that of Probable transaldolase from Bdellovibrio bacteriovorus (strain ATCC 15356 / DSM 50701 / NCIMB 9529 / HD100).